A 242-amino-acid chain; its full sequence is 1-(5-phosphoribosyl)-5-[(5-phosphoribosylamino)methylideneamino] imidazole-4-carboxamide isomerase (242 aa).

The active-site Proton acceptor is the aspartate 10. Residue aspartate 131 is the Proton donor of the active site.

Belongs to the HisA/HisF family.

Its subcellular location is the cytoplasm. The enzyme catalyses 1-(5-phospho-beta-D-ribosyl)-5-[(5-phospho-beta-D-ribosylamino)methylideneamino]imidazole-4-carboxamide = 5-[(5-phospho-1-deoxy-D-ribulos-1-ylimino)methylamino]-1-(5-phospho-beta-D-ribosyl)imidazole-4-carboxamide. It functions in the pathway amino-acid biosynthesis; L-histidine biosynthesis; L-histidine from 5-phospho-alpha-D-ribose 1-diphosphate: step 4/9. This Granulibacter bethesdensis (strain ATCC BAA-1260 / CGDNIH1) protein is 1-(5-phosphoribosyl)-5-[(5-phosphoribosylamino)methylideneamino] imidazole-4-carboxamide isomerase.